A 181-amino-acid polypeptide reads, in one-letter code: Ribulose bisphosphate carboxylase small subunit, chloroplastic 1 (181 aa).

The N-terminal 57 residues, 1-57 (MASSIVSSAAVATRSNVAQASMVAPFTGLKSAASFPVTKKNNNVDITSLASNGGRVR), are a transit peptide targeting the chloroplast.

It belongs to the RuBisCO small chain family. In terms of assembly, heterohexadecamer of 8 large and 8 small subunits.

It is found in the plastid. It localises to the chloroplast. In terms of biological role, ruBisCO catalyzes two reactions: the carboxylation of D-ribulose 1,5-bisphosphate, the primary event in carbon dioxide fixation, as well as the oxidative fragmentation of the pentose substrate. Both reactions occur simultaneously and in competition at the same active site. Although the small subunit is not catalytic it is essential for maximal activity. The sequence is that of Ribulose bisphosphate carboxylase small subunit, chloroplastic 1 from Solanum tuberosum (Potato).